A 274-amino-acid polypeptide reads, in one-letter code: Large ribosomal subunit protein uL2cz/uL2cy (274 aa).

2 disordered regions span residues 1–22 and 225–252; these read MAIHLYKTSTPSTRNGAVDSQV and PVDHPHGGGEGRAPIGRKKPVTPWGYPA.

Belongs to the universal ribosomal protein uL2 family. In terms of assembly, part of the 50S ribosomal subunit.

The protein localises to the plastid. The protein resides in the chloroplast. This is Large ribosomal subunit protein uL2cz/uL2cy (rpl2-A) from Barbarea verna (Land cress).